We begin with the raw amino-acid sequence, 140 residues long: Resuscitation-promoting factor RpfC (140 aa).

Positions 1 to 31 are cleaved as a signal peptide; it reads MTRIAKPLIKSAMAAGLVTASMSLSTAVAHA.

It belongs to the transglycosylase family. Rpf subfamily.

The protein resides in the secreted. In terms of biological role, factor that stimulates resuscitation of dormant cells. Has peptidoglycan (PG) hydrolytic activity. The protein is Resuscitation-promoting factor RpfC (rpfC) of Mycobacterium tuberculosis (strain ATCC 35801 / TMC 107 / Erdman).